A 205-amino-acid polypeptide reads, in one-letter code: Small ribosomal subunit protein uS4 (205 aa).

The span at 1-16 shows a compositional bias: basic and acidic residues; it reads MSKRETTKYKIDRRMG. Residues 1–46 are disordered; the sequence is MSKRETTKYKIDRRMGENIWGRPKSPVNRRDYGPGQHGQRRKGKLS. Residues 94 to 157 form the S4 RNA-binding domain; it reads SRLDAVIYRA…KQLVLVLESV (64 aa).

The protein belongs to the universal ribosomal protein uS4 family. As to quaternary structure, part of the 30S ribosomal subunit. Contacts protein S5. The interaction surface between S4 and S5 is involved in control of translational fidelity.

In terms of biological role, one of the primary rRNA binding proteins, it binds directly to 16S rRNA where it nucleates assembly of the body of the 30S subunit. Its function is as follows. With S5 and S12 plays an important role in translational accuracy. The sequence is that of Small ribosomal subunit protein uS4 from Bartonella henselae (strain ATCC 49882 / DSM 28221 / CCUG 30454 / Houston 1) (Rochalimaea henselae).